We begin with the raw amino-acid sequence, 93 residues long: MITPRNIFRHELIGLSVRIARSVHRDIQGISGRVVDETRNTLRIEMDDGREITVPKGIAVFHFRTPQGELVEIDGRALVARPEERIKKKFRKP.

It belongs to the eukaryotic/archaeal RNase P protein component 1 family. Consists of a catalytic RNA component and at least 4-5 protein subunits.

It is found in the cytoplasm. The catalysed reaction is Endonucleolytic cleavage of RNA, removing 5'-extranucleotides from tRNA precursor.. In terms of biological role, part of ribonuclease P, a protein complex that generates mature tRNA molecules by cleaving their 5'-ends. The protein is Ribonuclease P protein component 1 of Methanothermobacter thermautotrophicus (strain ATCC 29096 / DSM 1053 / JCM 10044 / NBRC 100330 / Delta H) (Methanobacterium thermoautotrophicum).